Here is a 347-residue protein sequence, read N- to C-terminus: Protein O-mannose kinase (347 aa).

The Cytoplasmic portion of the chain corresponds to 1 to 14 (MGGTAVGGVIGVRC). A helical; Signal-anchor for type II membrane protein transmembrane segment spans residues 15 to 35 (GVPAVLLCLGALLCANVLLYF). The Lumenal portion of the chain corresponds to 36 to 347 (YLDALYQNTN…SQSQRVRDML (312 aa)). The region spanning 79–347 (VRRVKLIGQG…SQSQRVRDML (269 aa)) is the Protein kinase domain.

This sequence belongs to the protein kinase superfamily. Ser/Thr protein kinase family. STKL subfamily.

The protein localises to the endoplasmic reticulum membrane. It carries out the reaction 3-O-[beta-D-GalNAc-(1-&gt;3)-beta-D-GlcNAc-(1-&gt;4)-alpha-D-Man]-L-Thr-[protein] + ATP = 3-O-[beta-D-GalNAc-(1-&gt;3)-beta-D-GlcNAc-(1-&gt;4)-(O-6-P-alpha-D-Man)]-Thr-[protein] + ADP + H(+). Protein O-mannose kinase that specifically mediates phosphorylation at the 6-position of an O-mannose of the trisaccharide (N-acetylgalactosamine (GalNAc)-beta-1,3-N-acetylglucosamine (GlcNAc)-beta-1,4-mannose) to generate phosphorylated O-mannosyl trisaccharide (N-acetylgalactosamine-beta-1,3-N-acetylglucosamine-beta-1,4-(phosphate-6-)mannose). Phosphorylated O-mannosyl trisaccharide is a carbohydrate structure present in alpha-dystroglycan (dag1), which is required for binding laminin G-like domain-containing extracellular proteins with high affinity. Only shows kinase activity when the GalNAc-beta-3-GlcNAc-beta-terminus is linked to the 4-position of O-mannose, suggesting that this disaccharide serves as the substrate recognition motif. The chain is Protein O-mannose kinase (pomk) from Danio rerio (Zebrafish).